Consider the following 238-residue polypeptide: Ribosomal RNA small subunit methyltransferase G (238 aa).

Residues Gly77, Phe82, 128-129, and Arg147 each bind S-adenosyl-L-methionine; that span reads AE. Residues 219 to 238 are disordered; sequence KETPNKYPRKPGTPNKLPIE.

It belongs to the methyltransferase superfamily. RNA methyltransferase RsmG family.

It is found in the cytoplasm. In terms of biological role, specifically methylates the N7 position of guanine in position 535 of 16S rRNA. The sequence is that of Ribosomal RNA small subunit methyltransferase G from Listeria monocytogenes serovar 1/2a (strain ATCC BAA-679 / EGD-e).